A 135-amino-acid polypeptide reads, in one-letter code: Probable transcription factor At2g20613 (135 aa).

A disordered region spans residues 1-104; that stretch reads MSHKRFNPLT…KRGGGGGEEA (104 aa). The span at 28–41 shows a compositional bias: acidic residues; that stretch reads DSSSDEETDSDSDS. A compositionally biased stretch (basic and acidic residues) spans 62–80; it reads KSVKISEKSVAKRSRETHE.

Belongs to the GeBP family.

This Arabidopsis thaliana (Mouse-ear cress) protein is Probable transcription factor At2g20613.